The following is a 252-amino-acid chain: 3-dehydroquinate dehydratase (252 aa).

Residues serine 21, 46–48, and arginine 82 contribute to the 3-dehydroquinate site; that span reads EWR. Residue histidine 143 is the Proton donor/acceptor of the active site. Residue lysine 170 is the Schiff-base intermediate with substrate of the active site. Residues arginine 213, serine 232, and glutamine 236 each contribute to the 3-dehydroquinate site.

This sequence belongs to the type-I 3-dehydroquinase family. As to quaternary structure, homodimer.

It carries out the reaction 3-dehydroquinate = 3-dehydroshikimate + H2O. Its pathway is metabolic intermediate biosynthesis; chorismate biosynthesis; chorismate from D-erythrose 4-phosphate and phosphoenolpyruvate: step 3/7. Its function is as follows. Involved in the third step of the chorismate pathway, which leads to the biosynthesis of aromatic amino acids. Catalyzes the cis-dehydration of 3-dehydroquinate (DHQ) and introduces the first double bond of the aromatic ring to yield 3-dehydroshikimate. In Escherichia coli (strain 55989 / EAEC), this protein is 3-dehydroquinate dehydratase.